The sequence spans 212 residues: Probable transaldolase (212 aa).

Lys84 functions as the Schiff-base intermediate with substrate in the catalytic mechanism.

This sequence belongs to the transaldolase family. Type 3B subfamily.

Its subcellular location is the cytoplasm. The catalysed reaction is D-sedoheptulose 7-phosphate + D-glyceraldehyde 3-phosphate = D-erythrose 4-phosphate + beta-D-fructose 6-phosphate. Its pathway is carbohydrate degradation; pentose phosphate pathway; D-glyceraldehyde 3-phosphate and beta-D-fructose 6-phosphate from D-ribose 5-phosphate and D-xylulose 5-phosphate (non-oxidative stage): step 2/3. In terms of biological role, transaldolase is important for the balance of metabolites in the pentose-phosphate pathway. The polypeptide is Probable transaldolase (Bacillus pumilus (strain SAFR-032)).